The following is a 582-amino-acid chain: Dihydroxy-acid dehydratase 3 (582 aa).

Residue C67 coordinates [2Fe-2S] cluster. Mg(2+) is bound at residue D99. C140 is a binding site for [2Fe-2S] cluster. 2 residues coordinate Mg(2+): D141 and K142. The residue at position 142 (K142) is an N6-carboxylysine. C212 serves as a coordination point for [2Fe-2S] cluster. Mg(2+) is bound at residue E462. S488 functions as the Proton acceptor in the catalytic mechanism.

It belongs to the IlvD/Edd family. In terms of assembly, homodimer. Requires [2Fe-2S] cluster as cofactor. It depends on Mg(2+) as a cofactor.

It catalyses the reaction (2R)-2,3-dihydroxy-3-methylbutanoate = 3-methyl-2-oxobutanoate + H2O. The enzyme catalyses (2R,3R)-2,3-dihydroxy-3-methylpentanoate = (S)-3-methyl-2-oxopentanoate + H2O. It participates in amino-acid biosynthesis; L-isoleucine biosynthesis; L-isoleucine from 2-oxobutanoate: step 3/4. It functions in the pathway amino-acid biosynthesis; L-valine biosynthesis; L-valine from pyruvate: step 3/4. In terms of biological role, functions in the biosynthesis of branched-chain amino acids. Catalyzes the dehydration of (2R,3R)-2,3-dihydroxy-3-methylpentanoate (2,3-dihydroxy-3-methylvalerate) into 2-oxo-3-methylpentanoate (2-oxo-3-methylvalerate) and of (2R)-2,3-dihydroxy-3-methylbutanoate (2,3-dihydroxyisovalerate) into 2-oxo-3-methylbutanoate (2-oxoisovalerate), the penultimate precursor to L-isoleucine and L-valine, respectively. The sequence is that of Dihydroxy-acid dehydratase 3 from Bradyrhizobium diazoefficiens (strain JCM 10833 / BCRC 13528 / IAM 13628 / NBRC 14792 / USDA 110).